The sequence spans 180 residues: Large ribosomal subunit protein uL6 (180 aa).

It belongs to the universal ribosomal protein uL6 family. As to quaternary structure, part of the 50S ribosomal subunit.

Functionally, this protein binds to the 23S rRNA, and is important in its secondary structure. It is located near the subunit interface in the base of the L7/L12 stalk, and near the tRNA binding site of the peptidyltransferase center. This chain is Large ribosomal subunit protein uL6, found in Salinispora tropica (strain ATCC BAA-916 / DSM 44818 / JCM 13857 / NBRC 105044 / CNB-440).